The sequence spans 278 residues: Undecaprenyl-diphosphatase (278 aa).

6 helical membrane-spanning segments follow: residues 49-69 (ANTF…VVFW), 97-117 (HVLI…DFID), 120-140 (LFSI…MIAA), 197-217 (ADFT…LSLV), 226-246 (GDLG…LLSI), and 258-278 (LVPF…IVYM).

Belongs to the UppP family.

It is found in the cell membrane. It catalyses the reaction di-trans,octa-cis-undecaprenyl diphosphate + H2O = di-trans,octa-cis-undecaprenyl phosphate + phosphate + H(+). Its function is as follows. Catalyzes the dephosphorylation of undecaprenyl diphosphate (UPP). Confers resistance to bacitracin. The sequence is that of Undecaprenyl-diphosphatase from Exiguobacterium sibiricum (strain DSM 17290 / CCUG 55495 / CIP 109462 / JCM 13490 / 255-15).